Consider the following 653-residue polypeptide: ATP-dependent zinc metalloprotease FtsH 1 (653 aa).

Residues Met1–Ser7 are Cytoplasmic-facing. Residues Ala8–Pro28 form a helical membrane-spanning segment. Residues Gly29–Gly105 are Extracellular-facing. A helical transmembrane segment spans residues Trp106–Leu126. The Cytoplasmic segment spans residues Met127–Ala653. Gly198–Thr205 contacts ATP. Zn(2+) is bound at residue His420. Glu421 is an active-site residue. Zn(2+)-binding residues include His424 and Asp496. The disordered stretch occupies residues Glu603 to Ala653. The span at Ser611 to Pro620 shows a compositional bias: pro residues.

The protein in the central section; belongs to the AAA ATPase family. This sequence in the C-terminal section; belongs to the peptidase M41 family. In terms of assembly, homohexamer. Zn(2+) serves as cofactor.

The protein resides in the cell membrane. Its function is as follows. Acts as a processive, ATP-dependent zinc metallopeptidase for both cytoplasmic and membrane proteins. Plays a role in the quality control of integral membrane proteins. The chain is ATP-dependent zinc metalloprotease FtsH 1 from Conexibacter woesei (strain DSM 14684 / CCUG 47730 / CIP 108061 / JCM 11494 / NBRC 100937 / ID131577).